A 382-amino-acid chain; its full sequence is Pentraxin-related protein PTX3 (382 aa).

A signal peptide spans 1–17 (MHISVILFCALWSAVSA). Residues 79–137 (VMLRGELQKLQAELGRLEGSLQKLCGPEAPSETRLARALDDLLQASRDAGRRLARLEDA) are a coiled coil. 2 disulfide bridges follow: cysteine 180-cysteine 358 and cysteine 211-cysteine 272. Positions 180–382 (CETAILFPMR…QPHGGAQYVY (203 aa)) constitute a Pentraxin (PTX) domain. Asparagine 221 carries N-linked (GlcNAc...) asparagine glycosylation.

In terms of assembly, homooctamer; disulfide-linked. Binds to C1q.

It localises to the secreted. Its function is as follows. Plays a role in the regulation of innate resistance to pathogens, inflammatory reactions, possibly clearance of self-components and female fertility. The polypeptide is Pentraxin-related protein PTX3 (PTX3) (Bos taurus (Bovine)).